Here is a 324-residue protein sequence, read N- to C-terminus: tRNA uridine(34) hydroxylase (324 aa).

A Rhodanese domain is found at 122–218 (QENRCLILDV…YGQQVGTGKW (97 aa)). The active-site Cysteine persulfide intermediate is the C178.

The protein belongs to the TrhO family.

It carries out the reaction uridine(34) in tRNA + AH2 + O2 = 5-hydroxyuridine(34) in tRNA + A + H2O. Functionally, catalyzes oxygen-dependent 5-hydroxyuridine (ho5U) modification at position 34 in tRNAs. The polypeptide is tRNA uridine(34) hydroxylase (Chlamydia pneumoniae (Chlamydophila pneumoniae)).